Here is a 234-residue protein sequence, read N- to C-terminus: Probable ascorbate-specific transmembrane electron transporter 1 (234 aa).

The Cytoplasmic portion of the chain corresponds to 1–9 (MGLGVRAAP). Residues 10-30 (FTYVAHALAVAAATMVLVWCI) traverse the membrane as a helical segment. In terms of domain architecture, Cytochrome b561 spans 13 to 217 (VAHALAVAAA…FGASVVVAAV (205 aa)). The Extracellular segment spans residues 31–48 (HFRGGLAFEATNKNLIFN). Residues 49 to 69 (VHPVLMLIGYIILGSEAIMVY) form a helical membrane-spanning segment. A heme b-binding site is contributed by His50. 65–73 (AIMVYKVLP) is a binding site for L-ascorbate. Residues 70–82 (KVLPTWKHDTTKL) lie on the Cytoplasmic side of the membrane. The helical transmembrane segment at 83–103 (IHLILHAIALVFGAVGIYCAF) threads the bilayer. Residues His84 and His118 each contribute to the heme b site. Residues 104–121 (KFHNESGIANLYSLHSWL) lie on the Extracellular side of the membrane. 114–123 (LYSLHSWLGI) serves as a coordination point for monodehydro-L-ascorbate radical. The chain crosses the membrane as a helical span at residues 122–142 (GIGTICLYGIQWIFGFVAFFF). The Cytoplasmic portion of the chain corresponds to 143–151 (PRASPSVRK). Residues 152 to 172 (GVLPWHILFGLFVYILALATA) traverse the membrane as a helical segment. His157 is a binding site for heme b. Residues 173–194 (ELGFLEKLTFLQSSGLDKYGAE) are Extracellular-facing. The helical transmembrane segment at 195–215 (AFLVNFTALIVVLFGASVVVA) threads the bilayer. Over 216–234 (AVSPARVEEPHEYAPIPES) the chain is Cytoplasmic.

Requires heme b as cofactor.

Its subcellular location is the membrane. In terms of biological role, two-heme-containing cytochrome. Catalyzes ascorbate-dependent trans-membrane electron transfer by utilizing a concerted H(+)/e(-) transfer mechanism. The chain is Probable ascorbate-specific transmembrane electron transporter 1 from Oryza sativa subsp. japonica (Rice).